We begin with the raw amino-acid sequence, 204 residues long: uncharacterized protein (204 aa).

Residues 109-136 (QFDIDVHKDQIEKLKDLYKALLRIAETT) are a coiled coil.

This is an uncharacterized protein from Bacillus subtilis (strain 168).